Here is a 238-residue protein sequence, read N- to C-terminus: Ribitol-5-phosphate cytidylyltransferase (238 aa).

CTP is bound by residues 7–10 and 81–87; these read LAGG and GSDRNET.

Belongs to the IspD/TarI cytidylyltransferase family. TarI subfamily.

The catalysed reaction is D-ribitol 5-phosphate + CTP + H(+) = CDP-L-ribitol + diphosphate. The protein operates within cell wall biogenesis; poly(ribitol phosphate) teichoic acid biosynthesis. Catalyzes the transfer of the cytidylyl group of CTP to D-ribitol 5-phosphate. The sequence is that of Ribitol-5-phosphate cytidylyltransferase from Staphylococcus saprophyticus subsp. saprophyticus (strain ATCC 15305 / DSM 20229 / NCIMB 8711 / NCTC 7292 / S-41).